A 54-amino-acid polypeptide reads, in one-letter code: Ovomucoid (54 aa).

The Kazal-like domain maps to 4-54 (VDCSDYPKPVCSLEDMPLCGSDSKTYSNKCNFCNAVVDSNGTLTLSHFGKC). 3 cysteine pairs are disulfide-bonded: Cys6–Cys36, Cys14–Cys33, and Cys22–Cys54. An N-linked (GlcNAc...) asparagine glycan is attached at Asn43.

It is found in the secreted. The sequence is that of Ovomucoid from Vultur gryphus (Andean condor).